The primary structure comprises 141 residues: Large ribosomal subunit protein uL11 (141 aa).

It belongs to the universal ribosomal protein uL11 family. Part of the ribosomal stalk of the 50S ribosomal subunit. Interacts with L10 and the large rRNA to form the base of the stalk. L10 forms an elongated spine to which L12 dimers bind in a sequential fashion forming a multimeric L10(L12)X complex. In terms of processing, one or more lysine residues are methylated.

In terms of biological role, forms part of the ribosomal stalk which helps the ribosome interact with GTP-bound translation factors. The chain is Large ribosomal subunit protein uL11 from Thermotoga sp. (strain RQ2).